The following is a 1183-amino-acid chain: DNA-directed RNA polymerase subunit beta (1183 aa).

A compositionally biased stretch (acidic residues) spans 1153–1162; that stretch reads DMQDNEEEDV. The segment at 1153 to 1183 is disordered; it reads DMQDNEEEDVVERKVDLQQKDAPQSQKEVTD. Positions 1173 to 1183 are enriched in polar residues; sequence DAPQSQKEVTD.

The protein belongs to the RNA polymerase beta chain family. As to quaternary structure, the RNAP catalytic core consists of 2 alpha, 1 beta, 1 beta' and 1 omega subunit. When a sigma factor is associated with the core the holoenzyme is formed, which can initiate transcription.

The catalysed reaction is RNA(n) + a ribonucleoside 5'-triphosphate = RNA(n+1) + diphosphate. In terms of biological role, DNA-dependent RNA polymerase catalyzes the transcription of DNA into RNA using the four ribonucleoside triphosphates as substrates. This Staphylococcus saprophyticus subsp. saprophyticus (strain ATCC 15305 / DSM 20229 / NCIMB 8711 / NCTC 7292 / S-41) protein is DNA-directed RNA polymerase subunit beta.